Here is a 555-residue protein sequence, read N- to C-terminus: CCR4-NOT transcription complex subunit 6-like (555 aa).

The segment at 1–152 is required for interaction with CNOT1, CNOT3 and CNOT7; the sequence is MRLIGMPKEK…NLYQDPDGTR (152 aa). LRR repeat units follow at residues 57-78, 80-101, 103-125, and 126-148; these read HLTA…IAKL, NLVY…LGNM, SLRE…GRLF, and QLQT…YQDP. A nuclease domain region spans residues 158–555; sequence MLDNLAVHPE…VNGVHLPNRR (398 aa). Residue Glu-240 coordinates Mg(2+). Positions 240, 276, 360, and 365 each coordinate substrate. Mg(2+) is bound at residue Asp-410. Asp-410 (proton donor/acceptor) is an active-site residue. Substrate is bound by residues Asn-412, Asn-479, and Phe-484.

It belongs to the CCR4/nocturin family. Component of the CCR4-NOT complex; distinct complexes seem to exist that differ in the participation of probably mutually exclusive catalytic subunits; the complex contains two deadenylase subunits, CNOT6 or CNOT6L, and CNOT7 or CNOT8. Interacts with CNOT1, CNOT3, CNOT7, CNOT8 and CNOT9. Interacts with TOB1. Interacts with NANOS2. Interacts with ZFP36. Interacts with ZFP36L2. Interacts with RBM46. Mg(2+) is required as a cofactor. Highly expressed in placenta, skeletal muscle, pancreas, testis and leukocytes. Weakly expressed in heart, spleen and thymus.

The protein resides in the cytoplasm. The protein localises to the nucleus. It catalyses the reaction Exonucleolytic cleavage of poly(A) to 5'-AMP.. Its activity is regulated as follows. Inhibited by free AMP, and with lesser efficiency also by CMP, GMP, UMP, ATP and neomycin. Its function is as follows. Has 3'-5' poly(A) exoribonuclease activity for synthetic poly(A) RNA substrate. Catalytic component of the CCR4-NOT complex which is one of the major cellular mRNA deadenylases and is linked to various cellular processes including bulk mRNA degradation, miRNA-mediated repression, translational repression during translational initiation and general transcription regulation. Additional complex functions may be a consequence of its influence on mRNA expression. May be involved in the deadenylation-dependent degradation of mRNAs through the 3'-UTR AU-rich element-mediated mechanism. Involved in deadenylation-dependent degradation of CDKN1B mRNA. Its mRNA deadenylase activity can be inhibited by TOB1. Mediates cell proliferation and cell survival and prevents cellular senescence. The sequence is that of CCR4-NOT transcription complex subunit 6-like (CNOT6L) from Homo sapiens (Human).